Reading from the N-terminus, the 131-residue chain is uncharacterized protein (131 aa).

The region spanning 1–116 (MYMARMLSEM…EMLEASSIQC (116 aa)) is the CMP/dCMP-type deaminase domain.

This is an uncharacterized protein from Caenorhabditis elegans.